Consider the following 572-residue polypeptide: MARILITSAIPYINGIKHLGNLVGSQLPADLYARYARARGHEVMFICATDEHGTPAELAAAKAGKPVAEYCAEMHAVQSDIAKRFGLSFDHFGRSSSERNKALTQYFAGKLAENGLIEEVSEKQVYSHADGRFLPDRYIEGTCPNCGYDKARGDQCENCTKQLDPTDLIDPRSAISGSTDLEVRETKHLYLRQSALKDQLDAWIDSKTDWPILTTSIAKKWLHDGDGLQDRGITRDLDWGVPVKKGTEDWPGMEGKVFYVWFDAPIEYIAGTAEWADANGLDDAAWERWWRTDKGADEVRYVQFMGKDNVPFHTLSFPATIMGSGDPWKLVDYIKSFNYLTYDGGQFSTSQGRGVFMDQALEILPADYWRWWLLSHAPENSDSEFTWENFQASVNKDLADVLGNFASRVTKFCRSKYGEEVPAGGAYGPAEEALIAELTTKLRAYEGHMDAMEVRKAAAELRAIWVAGNEYLQAAAPWSVFKTDPDAAAAIIRLGLNLVRFYAVLSQPFIPDASAALLRAMKAEDAGWPGDVAEALAALPAGHAFAVPEVTFAKISDADREAWAEKFSGTRD.

The 'HIGH' region signature appears at 11–21; it reads PYINGIKHLGN. Residues Cys-143, Cys-146, Cys-156, and Cys-159 each coordinate Zn(2+). Positions 346 to 350 match the 'KMSKS' region motif; that stretch reads QFSTS. Position 349 (Thr-349) interacts with ATP.

It belongs to the class-I aminoacyl-tRNA synthetase family. MetG type 1 subfamily. Monomer. Zn(2+) is required as a cofactor.

It localises to the cytoplasm. It catalyses the reaction tRNA(Met) + L-methionine + ATP = L-methionyl-tRNA(Met) + AMP + diphosphate. In terms of biological role, is required not only for elongation of protein synthesis but also for the initiation of all mRNA translation through initiator tRNA(fMet) aminoacylation. The sequence is that of Methionine--tRNA ligase from Dinoroseobacter shibae (strain DSM 16493 / NCIMB 14021 / DFL 12).